We begin with the raw amino-acid sequence, 317 residues long: Olfactory receptor 2B11 (317 aa).

At 1–29 (MKSDNHSFLGDSPKAFILLGVSDRPWLEL) the chain is on the extracellular side. Asparagine 5 carries an N-linked (GlcNAc...) asparagine glycan. A helical membrane pass occupies residues 30–53 (PLFVVLLLSYVLAMLGNVAIILAS). The Cytoplasmic segment spans residues 54 to 61 (RVDPQLHS). Residues 62–83 (PMYIFLSHLSFLDLCYTTTTVP) form a helical membrane-spanning segment. The Extracellular portion of the chain corresponds to 84 to 104 (QMLVNMGSSQKTISYGGCTVQ). Cysteine 101 and cysteine 193 are disulfide-bonded. Residues 105–124 (YAVFHWLGCTECIVLAAMAL) form a helical membrane-spanning segment. Topologically, residues 125-143 (DRYVAICKPLHYAVLMHRA) are cytoplasmic. The helical transmembrane segment at 144-162 (LCQQLVALAWLSGFGNSFV) threads the bilayer. At 163–199 (QVVLTVQLPFCGRQVLNNFFCEVPAVIKLSCADTAVN) the chain is on the extracellular side. Asparagine 199 carries N-linked (GlcNAc...) asparagine glycosylation. The helical transmembrane segment at 200–223 (DTILAVLVAFFVLVPLALILLSYG) threads the bilayer. Residues 224-240 (FIARAVLRIQSSKGRHK) are Cytoplasmic-facing. Residues 241–263 (AFGTCSSHLMIVSLFYLPAIYMY) traverse the membrane as a helical segment. The Extracellular portion of the chain corresponds to 264-276 (LQPPSSYSQEQGK). The helical transmembrane segment at 277-296 (FISLFYSIITPTLNPFTYTL) threads the bilayer. The Cytoplasmic portion of the chain corresponds to 297–317 (RNKDMKGALRRLLARIWRLCG).

This sequence belongs to the G-protein coupled receptor 1 family.

The protein resides in the cell membrane. Its function is as follows. Odorant receptor. In Homo sapiens (Human), this protein is Olfactory receptor 2B11 (OR2B11).